The following is a 128-amino-acid chain: MQRNMLKSKIHRVAVTHCELHYEGSCAIDEDLLEAANIVENERIDIWNINNGERFSTYAIKGERGSGMISLNGSAARRAQLGDLVIIAAFAVVDEAELKAGWKPDLVFVDDNNRIKGSRDHVPTQNWT.

The active-site Schiff-base intermediate with substrate; via pyruvic acid is serine 25. Serine 25 bears the Pyruvic acid (Ser) mark. A substrate-binding site is contributed by threonine 57. The active-site Proton donor is tyrosine 58. 73 to 75 contributes to the substrate binding site; that stretch reads GSA.

Belongs to the PanD family. In terms of assembly, heterooctamer of four alpha and four beta subunits. Pyruvate serves as cofactor. In terms of processing, is synthesized initially as an inactive proenzyme, which is activated by self-cleavage at a specific serine bond to produce a beta-subunit with a hydroxyl group at its C-terminus and an alpha-subunit with a pyruvoyl group at its N-terminus.

It is found in the cytoplasm. The enzyme catalyses L-aspartate + H(+) = beta-alanine + CO2. It functions in the pathway cofactor biosynthesis; (R)-pantothenate biosynthesis; beta-alanine from L-aspartate: step 1/1. In terms of biological role, catalyzes the pyruvoyl-dependent decarboxylation of aspartate to produce beta-alanine. This Paraburkholderia xenovorans (strain LB400) protein is Aspartate 1-decarboxylase.